The following is a 196-amino-acid chain: Peptidyl-tRNA hydrolase (196 aa).

His-15 provides a ligand contact to tRNA. His-20 serves as the catalytic Proton acceptor. 3 residues coordinate tRNA: Tyr-66, Asn-68, and Asn-114.

The protein belongs to the PTH family. Monomer.

It is found in the cytoplasm. It catalyses the reaction an N-acyl-L-alpha-aminoacyl-tRNA + H2O = an N-acyl-L-amino acid + a tRNA + H(+). In terms of biological role, hydrolyzes ribosome-free peptidyl-tRNAs (with 1 or more amino acids incorporated), which drop off the ribosome during protein synthesis, or as a result of ribosome stalling. Catalyzes the release of premature peptidyl moieties from peptidyl-tRNA molecules trapped in stalled 50S ribosomal subunits, and thus maintains levels of free tRNAs and 50S ribosomes. In Polynucleobacter necessarius subsp. necessarius (strain STIR1), this protein is Peptidyl-tRNA hydrolase.